Reading from the N-terminus, the 341-residue chain is Src kinase-associated phosphoprotein 2 (341 aa).

The tract at residues 54–95 (FKDRRDEEFPEPDEADTNDGGSLHSEQTDRDDENAYDGVQQS) is disordered. Positions 61–70 (EFPEPDEADT) are enriched in acidic residues. The PH domain occupies 105–208 (AVLKSGYLEK…WVEHIDFLIK (104 aa)). The tract at residues 246 to 265 (EEDVPQPSKPKVTLVNKPPP) is disordered. In terms of domain architecture, SH3 spans 279-340 (DYANYFQGLW…PKEYLLELYV (62 aa)).

It belongs to the SKAP family. In terms of processing, phosphorylated on tyrosines.

Its subcellular location is the cytoplasm. May be involved in B-cell and macrophage adhesion processes. May play a role in src signaling pathway. The polypeptide is Src kinase-associated phosphoprotein 2 (skap2) (Danio rerio (Zebrafish)).